Consider the following 422-residue polypeptide: Beta-1,3-galactosyltransferase 2 (422 aa).

The Cytoplasmic segment spans residues 1–24 (MLQWRRRHCCFAKMTWNAKRSLFR). Residues 25 to 45 (THLIGVLSLVFLFAMFLFFNH) form a helical; Signal-anchor for type II membrane protein membrane-spanning segment. Over 46 to 422 (HDWLPGRAGF…AGRYRHRKLH (377 aa)) the chain is Lumenal. Asparagine 75, asparagine 100, asparagine 119, asparagine 176, and asparagine 226 each carry an N-linked (GlcNAc...) asparagine glycan. Positions 90–110 (TLRPQTATNSNNTDLSPQGVT) are disordered.

This sequence belongs to the glycosyltransferase 31 family. Mn(2+) serves as cofactor.

The protein resides in the golgi apparatus membrane. The enzyme catalyses an N-acetyl-beta-D-glucosaminyl derivative + UDP-alpha-D-galactose = a beta-D-galactosyl-(1-&gt;3)-N-acetyl-beta-D-glucosaminyl derivative + UDP + H(+). The catalysed reaction is a beta-D-GlcNAc-(1-&gt;3)-beta-D-Gal-(1-&gt;4)-beta-D-Glc-(1&lt;-&gt;1)-Cer(d18:1(4E)) + UDP-alpha-D-galactose = a beta-D-Gal-(1-&gt;3)-beta-D-GlcNAc-(1-&gt;3)-beta-D-Gal-(1-&gt;4)-beta-D-Glc-(1&lt;-&gt;1')-Cer(d18:1(4E)) + UDP + H(+). It catalyses the reaction a neolactoside IV(3)-beta-GlcNAc-nLc4Cer(d18:1(4E)) + UDP-alpha-D-galactose = a neolactoside IV(3)-beta-[Gal-beta-(1-&gt;3)-GlcNAc]-nLc4Cer(d18:1(4E)) + UDP + H(+). It functions in the pathway protein modification; protein glycosylation. Functionally, beta-1,3-galactosyltransferase that transfers galactose from UDP-galactose to substrates with a terminal beta-N-acetylglucosamine (beta-GlcNAc) residue. Can also utilize substrates with a terminal galactose residue, albeit with lower efficiency. Involved in the biosynthesis of the carbohydrate moieties of glycolipids and glycoproteins. Inactive towards substrates with terminal alpha-N-acetylglucosamine (alpha-GlcNAc) or alpha-N-acetylgalactosamine (alpha-GalNAc) residues. The protein is Beta-1,3-galactosyltransferase 2 (B3GALT2) of Pongo abelii (Sumatran orangutan).